Here is a 247-residue protein sequence, read N- to C-terminus: NAD-dependent protein deacetylase (247 aa).

One can recognise a Deacetylase sirtuin-type domain in the interval 1–247 (MDTRKNLKEL…LGGIVEELGY (247 aa)). Alanine 23, threonine 27, phenylalanine 34, arginine 35, glutamine 104, isoleucine 106, aspartate 107, and histidine 122 together coordinate NAD(+). Phenylalanine 34 is a binding site for nicotinamide. Nicotinamide contacts are provided by isoleucine 106 and aspartate 107. The active-site Proton acceptor is the histidine 122. 4 residues coordinate Zn(2+): cysteine 130, cysteine 133, cysteine 152, and cysteine 155. The NAD(+) site is built by threonine 193, serine 194, asparagine 216, and isoleucine 234.

It belongs to the sirtuin family. Class U subfamily. Requires Zn(2+) as cofactor.

The protein resides in the cytoplasm. The enzyme catalyses N(6)-acetyl-L-lysyl-[protein] + NAD(+) + H2O = 2''-O-acetyl-ADP-D-ribose + nicotinamide + L-lysyl-[protein]. Functionally, NAD-dependent protein deacetylase which modulates the activities of several enzymes which are inactive in their acetylated form. This chain is NAD-dependent protein deacetylase, found in Clostridium tetani (strain Massachusetts / E88).